Consider the following 338-residue polypeptide: NLP effector protein 6 (338 aa).

The N-terminal stretch at 1–19 (MRFTTIFWISLTVLATVRA) is a signal peptide. Positions 68 to 119 (LTLSPSASSPAKRNVTLPPDTTMRPDPRQTEPPTEAPTPASTPAPTPDPGPW) are disordered. A glycan (N-linked (GlcNAc...) asparagine) is linked at Asn81. Positions 101–117 (TEAPTPASTPAPTPDPG) are enriched in pro residues. Residues 205 to 215 (AIMYSWYFPKD) carry the Conserved undecapeptide motif I motif. The Hepta-peptide GHRHDWE motif II motif lies at 222 to 227 (GHRHDW).

The protein belongs to the Necrosis inducing protein (NPP1) family.

It localises to the secreted. In terms of biological role, secreted effector that contributes strongly to virulence during infection by P.capsici. Causes large necrotic areas in both host C.annuum and non-host N.benthamiana. This Phytophthora capsici protein is NLP effector protein 6.